The sequence spans 486 residues: ATP synthase subunit beta (486 aa).

170–177 (GGAGVGKT) provides a ligand contact to ATP.

The protein belongs to the ATPase alpha/beta chains family. As to quaternary structure, F-type ATPases have 2 components, CF(1) - the catalytic core - and CF(0) - the membrane proton channel. CF(1) has five subunits: alpha(3), beta(3), gamma(1), delta(1), epsilon(1). CF(0) has three main subunits: a(1), b(2) and c(9-12). The alpha and beta chains form an alternating ring which encloses part of the gamma chain. CF(1) is attached to CF(0) by a central stalk formed by the gamma and epsilon chains, while a peripheral stalk is formed by the delta and b chains.

Its subcellular location is the cell membrane. It catalyses the reaction ATP + H2O + 4 H(+)(in) = ADP + phosphate + 5 H(+)(out). Its function is as follows. Produces ATP from ADP in the presence of a proton gradient across the membrane. The catalytic sites are hosted primarily by the beta subunits. In Kineococcus radiotolerans (strain ATCC BAA-149 / DSM 14245 / SRS30216), this protein is ATP synthase subunit beta.